The chain runs to 130 residues: uncharacterized protein (130 aa).

Polar residues-rich tracts occupy residues 1-27 and 36-46; these read MEILNQFSQFSPNMEAQGASSIPQPSQ and QAENQETAKNG. 2 disordered regions span residues 1–46 and 103–130; these read MEIL…AKNG and VSAQTQKATSVKFDRRRNELDSDEELDL. Positions 27 to 51 form a coiled coil; it reads QDAHEKARQQAENQETAKNGMISQI.

Belongs to the PDCD5 family.

This is an uncharacterized protein from Caenorhabditis elegans.